The following is a 651-amino-acid chain: MGLKKFFKIKPPEEATPEQNKDTLMELGISVKNPSKKRKEKFAAYGKFANDKAEDKVYAPPGYEQYARPQDELEDLNASPLDANANEATAGSNRGSSGTQDLGNGAESNSMQDPYAIENDDYRYDDDPYARFQANKSNGRGSVNAAPYGDYGGGYNGTSLNSYNNDGPYSNQNTSNSWVNANGRNSLNHSNSTLNVGPSRQTRQPPVSTSTNSLSLDQRSPLANPMQEKRNPYADMNSYGGAYDSNTNRSSGTRQGSSKNANPYASMANDSYSNGNLNRSANPYSSRSVRQPQSQQAPMTYTPSFIASDEAARNSEVDLNEEPRTGEFDFEEVYADKSAENRAALDEPDLNAVMTNEDSIDLNASEVDHSSRQQQQQQWFMDEQQQQQQHFNATNNQYGDQRGYKTFEEIQKEEEARQQQEEDEAVDEIKQEIKFTKQSSVASTRNTLKMAQDAERAGMNTLGMLGHQSEQLNNVEGNLDLMKVQNKVADEKVAELKKLNRSILAVHVSNPFNSKRRRREREEQLKNRKIEEKLMREQTSQQLSQSTQRIEGAMNANNNISEVRERYQRKNVLEKAKRYQFENDEEDDEMELEIDRNLDQIQQVSNRLKKMALTTGKELDSQQKRLNNIEESTDDLDINLHMNTNRLAGIR.

3 disordered regions span residues 1–22 (MGLK…QNKD), 53–299 (AEDK…QAPM), and 313–332 (RNSE…DFEE). Serine 79 and serine 92 each carry phosphoserine. Over residues 86–112 (NEATAGSNRGSSGTQDLGNGAESNSMQ) the composition is skewed to polar residues. Positions 120–129 (DDYRYDDDPY) are enriched in basic and acidic residues. 2 stretches are compositionally biased toward polar residues: residues 157–218 (GTSL…SLDQ) and 244–284 (DSNT…ANPY). Phosphoserine is present on residues serine 186, serine 190, serine 213, serine 271, and serine 273. The segment covering 285–296 (SSRSVRQPQSQQ) has biased composition (low complexity). Over residues 313–327 (RNSEVDLNEEPRTGE) the composition is skewed to basic and acidic residues. Serine 315 carries the phosphoserine modification. Position 355 is a phosphothreonine (threonine 355). Serine 359 carries the post-translational modification Phosphoserine. T-SNARE coiled-coil homology domains are found at residues 434-496 (KFTK…VAEL) and 588-650 (DEME…LAGI).

Belongs to the SNAP-25 family. Interacts with SRO7 and SRO77.

In terms of biological role, component of a SNARE complex that may be the effector of SEC4 function in exocytosis. The chain is Protein transport protein SEC9 (SEC9) from Saccharomyces cerevisiae (strain ATCC 204508 / S288c) (Baker's yeast).